Consider the following 206-residue polypeptide: Enterobactin synthase component D (206 aa).

3 residues coordinate Mg(2+): D107, E109, and E152.

Belongs to the P-Pant transferase superfamily. EntD family. In terms of assembly, entB, EntD, EntE, and EntF form a multienzyme complex called enterobactin synthase. It depends on Mg(2+) as a cofactor.

The protein resides in the membrane. The enzyme catalyses apo-[aryl-carrier protein] + CoA = holo-[aryl-carrier protein] + adenosine 3',5'-bisphosphate + H(+). It catalyses the reaction apo-[peptidyl-carrier protein] + CoA = holo-[peptidyl-carrier protein] + adenosine 3',5'-bisphosphate + H(+). Its pathway is siderophore biosynthesis; enterobactin biosynthesis. Its function is as follows. Involved in the biosynthesis of the siderophore enterobactin (enterochelin), which is a macrocyclic trimeric lactone of N-(2,3-dihydroxybenzoyl)-serine. The serine trilactone serves as a scaffolding for the three catechol functionalities that provide hexadentate coordination for the tightly ligated iron(2+) atoms. Plays an essential role in the assembly of the enterobactin by catalyzing the transfer of the 4'-phosphopantetheine (Ppant) moiety from coenzyme A to the apo-domains of both EntB (ArCP domain) and EntF (PCP domain) to yield their holo-forms which make them competent for the activation of 2,3-dihydroxybenzoate (DHB) and L-serine, respectively. This chain is Enterobactin synthase component D, found in Escherichia coli (strain K12).